A 132-amino-acid polypeptide reads, in one-letter code: D-ribose pyranase (132 aa).

Residue His-20 is the Proton donor of the active site. Residues Asp-28, His-99, and 121 to 123 (YAN) contribute to the substrate site.

Belongs to the RbsD / FucU family. RbsD subfamily. Homodecamer.

The protein resides in the cytoplasm. The catalysed reaction is beta-D-ribopyranose = beta-D-ribofuranose. The protein operates within carbohydrate metabolism; D-ribose degradation; D-ribose 5-phosphate from beta-D-ribopyranose: step 1/2. In terms of biological role, catalyzes the interconversion of beta-pyran and beta-furan forms of D-ribose. This Chromobacterium violaceum (strain ATCC 12472 / DSM 30191 / JCM 1249 / CCUG 213 / NBRC 12614 / NCIMB 9131 / NCTC 9757 / MK) protein is D-ribose pyranase.